A 291-amino-acid chain; its full sequence is Kidney mitochondrial carrier protein 1 (291 aa).

N-acetylserine is present on S2. Solcar repeat units follow at residues 7–96, 104–189, and 198–289; these read KPFV…LKRL, ETLP…TKKH, and DTVY…LKKL. A run of 6 helical transmembrane segments spans residues 9-26, 71-89, 105-124, 164-183, 204-224, and 264-283; these read FVYG…TFPI, GIAP…KIGT, TLPI…STIA, GVSL…LPVY, FLSS…VDVV, and GFWP…FVTY.

It belongs to the mitochondrial carrier (TC 2.A.29) family. In terms of assembly, interacts with VDAC1.

The protein localises to the mitochondrion inner membrane. It carries out the reaction sulfite(in) + sulfate(out) = sulfite(out) + sulfate(in). It catalyses the reaction thiosulfate(in) + sulfate(out) = thiosulfate(out) + sulfate(in). The catalysed reaction is sulfate(out) + phosphate(in) = sulfate(in) + phosphate(out). The enzyme catalyses oxalate(in) + sulfate(out) = oxalate(out) + sulfate(in). It carries out the reaction malonate(in) + sulfate(out) = malonate(out) + sulfate(in). It catalyses the reaction maleate(in) + sulfate(out) = maleate(out) + sulfate(in). The catalysed reaction is (S)-malate(in) + sulfate(out) = (S)-malate(out) + sulfate(in). The enzyme catalyses (3S)-citramalate(in) + sulfate(out) = (3S)-citramalate(out) + sulfate(in). It carries out the reaction (3R)-citramalate(in) + sulfate(out) = (3R)-citramalate(out) + sulfate(in). It catalyses the reaction sulfate(out) + succinate(in) = sulfate(in) + succinate(out). The catalysed reaction is (S,S)-tartrate(in) + sulfate(out) = (S,S)-tartrate(out) + sulfate(in). The enzyme catalyses (2R,3R)-tartrate(in) + sulfate(out) = (2R,3R)-tartrate(out) + sulfate(in). It carries out the reaction D-aspartate(in) + sulfate(out) = D-aspartate(out) + sulfate(in). It catalyses the reaction L-aspartate(in) + sulfate(out) = L-aspartate(out) + sulfate(in). The catalysed reaction is sulfate(in) = sulfate(out). The enzyme catalyses phosphate(in) = phosphate(out). It carries out the reaction (S)-malate(out) = (S)-malate(in). Its activity is regulated as follows. Increased activity at pH 6.0. sulfate/sulfate exchange activity is inhibited strongly by pyridoxal 5'-phosphate, bathophenanthroline and the organic mercurials mersalyl, p-chloromercuribenzoate and HgCl2. Its function is as follows. Antiporter that transports inorganic anions (sulfate, sulfite, thiosulfate and phosphate) and, to a lesser extent, a variety of dicarboxylates (e.g. malonate, malate and citramalate) and, even more so, aspartate. The sulfate/sulfate exchange is much higher than the phosphate/phosphate and malate/malate exchanges. The transport affinities is higher for sulfate and thiosulfate than for any other substrate. May catalyze the export of sulfite and thiosulfate (the hydrogen sulfide degradation products) from the mitochondria, thereby modulating the level of the hydrogen sulfide. Also may mediate a very low unidirectional transport of sulfate, phosphate and (S)-malate. This Homo sapiens (Human) protein is Kidney mitochondrial carrier protein 1.